Consider the following 292-residue polypeptide: 4-diphosphocytidyl-2-C-methyl-D-erythritol kinase (292 aa).

The active site involves Lys10. 100–110 (PIGSGLGGGSS) is a binding site for ATP. The active site involves Asp142.

It belongs to the GHMP kinase family. IspE subfamily. As to quaternary structure, homodimer.

The enzyme catalyses 4-CDP-2-C-methyl-D-erythritol + ATP = 4-CDP-2-C-methyl-D-erythritol 2-phosphate + ADP + H(+). It participates in isoprenoid biosynthesis; isopentenyl diphosphate biosynthesis via DXP pathway; isopentenyl diphosphate from 1-deoxy-D-xylulose 5-phosphate: step 3/6. Its function is as follows. Catalyzes the phosphorylation of the position 2 hydroxy group of 4-diphosphocytidyl-2C-methyl-D-erythritol. The protein is 4-diphosphocytidyl-2-C-methyl-D-erythritol kinase of Buchnera aphidicola subsp. Schizaphis graminum (strain Sg).